The following is a 601-amino-acid chain: MPERELWPAGTGSEPVTRVGSCDSMMSSTSTRSGSSDSSYDFLSTEEKECLLFLEETIGSLDTEADSGLSTDESEPATTPRGFRALPITQPTPRGGPEETITQQGRTPRTVTESSSSHPPEPQGLGLRSGSYSLPRNIHIARSQNFRKSTTQASSHNPGEPGRLAPEPEKEQVSQSSQPRQAPASPQEAALDLDVVLIPPPEAFRDTQPEQCREASLPEGPGQQGHTPQLHTPSSSQEREQTPSEAMSQKAKETVSTRYTQPQPPPAGLPQNARAEDAPLSSGEDPNSRLAPLTTPKPRKLPPNIVLKSSRSSFHSDPQHWLSRHTEAAPGDSGLISCSLQEQRKARKEALEKLGLPQDQDEPGLHLSKPTSSIRPKETRAQHLSPAPGLAQPAAPAQASAAIPAAGKALAQAPAPAPGPAQGPLPMKSPAPGNVAASKSMPISIPKAPRANSALTPPKPESGLTLQESNTPGLRQMNFKSNTLERSGVGLSSYLSTEKDASPKTSTSLGKGSFLDKISPSVLRNSRPRPASLGTGKDFAGIQVGKLADLEQEQSSKRLSYQGQSRDKLPRPPCVSVKISPKGVPNEHRREALKKLGLLKE.

3 disordered regions span residues 1–41 (MPER…SSYD), 56–538 (ETIG…TGKD), and 551–601 (EQEQ…LLKE). A compositionally biased stretch (low complexity) spans 20–39 (GSCDSMMSSTSTRSGSSDSS). Residues 100–118 (TITQQGRTPRTVTESSSSH) show a composition bias toward polar residues. Ser-131 and Ser-133 each carry phosphoserine. The segment covering 142-157 (RSQNFRKSTTQASSHN) has biased composition (polar residues). Low complexity predominate over residues 174–190 (SQSSQPRQAPASPQEAA). Basic and acidic residues predominate over residues 203–213 (AFRDTQPEQCR). Composition is skewed to polar residues over residues 224–236 (QGHTPQLHTPSSS) and 307–316 (LKSSRSSFHS). The span at 342–352 (EQRKARKEALE) shows a compositional bias: basic and acidic residues. A compositionally biased stretch (low complexity) spans 384 to 414 (LSPAPGLAQPAAPAQASAAIPAAGKALAQAP). Pro residues predominate over residues 415-429 (APAPGPAQGPLPMKS). The span at 464–485 (LTLQESNTPGLRQMNFKSNTLE) shows a compositional bias: polar residues. Phosphoserine is present on Ser-519. Residues 585-601 (PNEHRREALKKLGLLKE) show a composition bias toward basic and acidic residues.

Belongs to the SARG family. Highly expressed in prostate.

It localises to the cytoplasm. Its function is as follows. Putative androgen-specific receptor. This chain is Specifically androgen-regulated gene protein (SARG), found in Homo sapiens (Human).